The sequence spans 2148 residues: Polyketide synthase 1 (2148 aa).

The tract at residues 19–261 is N-terminal acylcarrier protein transacylase domain (SAT); that stretch reads FIFGDQSSCN…TPLAVHAPYH (243 aa). Residues 394-829 enclose the Ketosynthase family 3 (KS3) domain; it reads ESKIAIIGMS…GGNTALLVED (436 aa). Residues C566, H701, and H745 each act as for beta-ketoacyl synthase activity in the active site. A malonyl-CoA:ACP transacylase (MAT) domain region spans residues 929–1233; sequence AFVFSGQGSQ…PSLMRNKDGW (305 aa). The active-site For acyl/malonyl transferase activity is the S1018. A product template (PT) domain region spans residues 1310-1624; that stretch reads TASVHRIVHE…RKVLNTAMPP (315 aa). An N-terminal hotdog fold region spans residues 1314–1447; sequence HRIVHESVDK…SSLHFEQPKV (134 aa). Residues 1314 to 1619 form the PKS/mFAS DH domain; it reads HRIVHESVDK…FQGIPRKVLN (306 aa). Residue H1346 is the Proton acceptor; for dehydratase activity of the active site. Residues 1474 to 1619 are C-terminal hotdog fold; the sequence is LNSRMSSGVI…FQGIPRKVLN (146 aa). The Proton donor; for dehydratase activity role is filled by D1533. Residues 1619 to 1657 are disordered; the sequence is NTAMPPPKSQNEAPVRSAPAKPAAKPPKSASSEHSGHFA. A compositionally biased stretch (low complexity) spans 1635 to 1650; that stretch reads SAPAKPAAKPPKSASS. A Carrier 1 domain is found at 1678–1752; it reads RNPMLAVFKI…DLATHLGLDT (75 aa). S1712 bears the O-(pantetheine 4'-phosphoryl)serine mark. Positions 1755 to 1790 are enriched in low complexity; it reads SDQSSGQSSSSGGLSPRSDSIGEITSSATTPPSLSP. A disordered region spans residues 1755–1796; the sequence is SDQSSGQSSSSGGLSPRSDSIGEITSSATTPPSLSPRGSVSG. Residues 1793-1870 enclose the Carrier 2 domain; sequence SVSGSQCKDV…SFKHMFQQGH (78 aa). S1830 is subject to O-(pantetheine 4'-phosphoryl)serine. A thioesterase (TE) domain region spans residues 1882 to 2146; that stretch reads LKQYRATSTL…ERVAAFIRST (265 aa). S1973 (for thioesterase activity) is an active-site residue.

Functionally, polyketide synthase; part of the Pks1 gene cluster that mediates the biosynthesis of an anthraquinone derivative pigment that contributes to conidial pigmentation that provides protection from UV radiation, heat and cold stress. The polyketide synthase Pks1 produces 1-acetyl-2,4,6,8-tetrahydroxy-9,10-anthraquinone though condensation of acetyl-CoA with malonyl-CoA. The dehydratase EthD and the laccase Mlac1 further convert the anthraquinone derivative into the final conidial pigment. The chain is Polyketide synthase 1 from Metarhizium guizhouense (strain ARSEF 977).